The following is a 491-amino-acid chain: Probable glycine dehydrogenase (decarboxylating) subunit 2 (491 aa).

The residue at position 264 (K264) is an N6-(pyridoxal phosphate)lysine.

Belongs to the GcvP family. C-terminal subunit subfamily. As to quaternary structure, the glycine cleavage system is composed of four proteins: P, T, L and H. In this organism, the P 'protein' is a heterodimer of two subunits. It depends on pyridoxal 5'-phosphate as a cofactor.

The catalysed reaction is N(6)-[(R)-lipoyl]-L-lysyl-[glycine-cleavage complex H protein] + glycine + H(+) = N(6)-[(R)-S(8)-aminomethyldihydrolipoyl]-L-lysyl-[glycine-cleavage complex H protein] + CO2. Its function is as follows. The glycine cleavage system catalyzes the degradation of glycine. The P protein binds the alpha-amino group of glycine through its pyridoxal phosphate cofactor; CO(2) is released and the remaining methylamine moiety is then transferred to the lipoamide cofactor of the H protein. This is Probable glycine dehydrogenase (decarboxylating) subunit 2 from Coxiella burnetii (strain Dugway 5J108-111).